A 126-amino-acid polypeptide reads, in one-letter code: Large ribosomal subunit protein bL12 (126 aa).

The protein belongs to the bacterial ribosomal protein bL12 family. Homodimer. Part of the ribosomal stalk of the 50S ribosomal subunit. Forms a multimeric L10(L12)X complex, where L10 forms an elongated spine to which 2 to 4 L12 dimers bind in a sequential fashion. Binds GTP-bound translation factors.

In terms of biological role, forms part of the ribosomal stalk which helps the ribosome interact with GTP-bound translation factors. Is thus essential for accurate translation. In Bordetella petrii (strain ATCC BAA-461 / DSM 12804 / CCUG 43448), this protein is Large ribosomal subunit protein bL12.